The chain runs to 154 residues: Lipoprotein signal peptidase (154 aa).

Transmembrane regions (helical) follow at residues 52–72 and 85–105; these read ILAG…IGIV and LGVA…DRAV. Residues Asp-111 and Asp-129 contribute to the active site. A helical transmembrane segment spans residues 124 to 144; sequence IFNIADSSLCVGVMLLFIQML.

The protein belongs to the peptidase A8 family.

The protein resides in the cell membrane. The enzyme catalyses Release of signal peptides from bacterial membrane prolipoproteins. Hydrolyzes -Xaa-Yaa-Zaa-|-(S,diacylglyceryl)Cys-, in which Xaa is hydrophobic (preferably Leu), and Yaa (Ala or Ser) and Zaa (Gly or Ala) have small, neutral side chains.. It functions in the pathway protein modification; lipoprotein biosynthesis (signal peptide cleavage). In terms of biological role, this protein specifically catalyzes the removal of signal peptides from prolipoproteins. This is Lipoprotein signal peptidase from Bacillus subtilis (strain 168).